The sequence spans 561 residues: 3-hydroxy-3-methylglutaryl-coenzyme A reductase 3 (561 aa).

The next 2 membrane-spanning stretches (helical) occupy residues 25 to 45 and 69 to 89; these read PIRH…AYLM and IFGL…AFVQ. The interval 90–145 is linker; the sequence is SIVSSSDDEEEDFLVGPARGSSAAAAVAPPPPPSSPAQCSLLGSPHDDAARERMPE. Residues 113–146 are disordered; that stretch reads AAAVAPPPPPSSPAQCSLLGSPHDDAARERMPEE. The span at 134-143 shows a compositional bias: basic and acidic residues; the sequence is PHDDAARERM. The segment at 146-561 is catalytic; sequence EDEEIVSSVV…SSKDMSKVIS (416 aa). Residue Glu-240 is the Charge relay system of the active site. A glycan (N-linked (GlcNAc...) asparagine) is linked at Asn-304. Catalysis depends on charge relay system residues Lys-372 and Asp-448. Residue His-546 is the Proton donor of the active site. The N-linked (GlcNAc...) asparagine glycan is linked to Asn-550.

Belongs to the HMG-CoA reductase family.

The protein resides in the endoplasmic reticulum membrane. It catalyses the reaction (R)-mevalonate + 2 NADP(+) + CoA = (3S)-3-hydroxy-3-methylglutaryl-CoA + 2 NADPH + 2 H(+). The protein operates within metabolic intermediate biosynthesis; (R)-mevalonate biosynthesis; (R)-mevalonate from acetyl-CoA: step 3/3. Catalyzes the synthesis of mevalonate. The specific precursor of all isoprenoid compounds present in plants. This is 3-hydroxy-3-methylglutaryl-coenzyme A reductase 3 (HMG3) from Oryza sativa subsp. japonica (Rice).